Reading from the N-terminus, the 294-residue chain is uncharacterized protein (294 aa).

It belongs to the glycosyltransferase 2 family.

This is an uncharacterized protein from Haemophilus influenzae (strain ATCC 51907 / DSM 11121 / KW20 / Rd).